Consider the following 458-residue polypeptide: Tyrosine phenol-lyase (458 aa).

Residue Lys258 is modified to N6-(pyridoxal phosphate)lysine.

Belongs to the beta-eliminating lyase family. As to quaternary structure, homotetramer. Requires pyridoxal 5'-phosphate as cofactor.

The catalysed reaction is L-tyrosine + H2O = phenol + pyruvate + NH4(+). The chain is Tyrosine phenol-lyase (tpl) from Pasteurella multocida (strain Pm70).